The following is a 479-amino-acid chain: PTS system sucrose-specific EIIBC component (479 aa).

Residues 4–87 (PAVAKELLTL…AKLTGMSEMS (84 aa)) enclose the PTS EIIB type-1 domain. Cys26 (phosphocysteine intermediate; for EIIB activity) is an active-site residue. 11 helical membrane passes run 112–132 (IFVPIIPAIVAGGLLMGIYNL), 158–178 (MINTFANAPFVYLPILLAFSA), 182–202 (FGGNPYLGAALGMLMVHPDLL), 204–224 (GWGFGGASVSGNIPVWNILGF), 232–252 (QGSVLPVLVSAFILAKVELGL), 264–284 (LTPLLAIFIAGLLTFTVVGPF), 303–323 (AGFVGGAVFGLIYAPFVITGM), 345–365 (FIFPIAAMSNVSQGAAALAVG), 376–396 (IAIPSGVTGLLGITEPAMFGV), 403–423 (PFIAAVCAAALSSAFITMFNV), and 448–468 (IAGMVIAFLTAFVLTIVLGIG). One can recognise a PTS EIIC type-1 domain in the interval 120-477 (IVAGGLLMGI…GDRAKVGKKA (358 aa)).

The protein resides in the cell inner membrane. The catalysed reaction is N(pros)-phospho-L-histidyl-[protein](out) + sucrose = sucrose 6(G)-phosphate(in) + L-histidyl-[protein]. The phosphoenolpyruvate-dependent sugar phosphotransferase system (sugar PTS), a major carbohydrate active transport system, catalyzes the phosphorylation of incoming sugar substrates concomitantly with their translocation across the cell membrane. This system is involved in sucrose transport. The chain is PTS system sucrose-specific EIIBC component from Vibrio alginolyticus.